A 294-amino-acid polypeptide reads, in one-letter code: Formate dehydrogenase, nitrate-inducible, iron-sulfur subunit (294 aa).

The Periplasmic portion of the chain corresponds to 1 to 256 (MAMETQDIIK…DTSVSLWKGA (256 aa)). 4Fe-4S ferredoxin-type domains follow at residues 30 to 58 (VAKL…IRDE), 91 to 123 (LEWL…QYAN), 124 to 153 (GIVD…LNKE), and 158 to 189 (YKCT…FGTK). [4Fe-4S] cluster contacts are provided by cysteine 39, cysteine 42, cysteine 45, cysteine 49, cysteine 100, cysteine 103, cysteine 108, cysteine 112, cysteine 133, cysteine 136, cysteine 139, cysteine 143, cysteine 160, cysteine 163, cysteine 175, and cysteine 179. The helical transmembrane segment at 257 to 279 (LKPLAAAGFIATFAGLIFHYIGI) threads the bilayer. Over 280–294 (GPNKEVDDDEEDHHE) the chain is Cytoplasmic.

As to quaternary structure, trimer of heterotrimers, consisting of subunits alpha, beta and gamma. It depends on [4Fe-4S] cluster as a cofactor.

Its subcellular location is the cell inner membrane. Functionally, formate dehydrogenase allows E.coli to use formate as major electron donor during anaerobic respiration, when nitrate is used as electron acceptor. The beta subunit FdnH is an electron transfer unit containing 4 iron-sulfur clusters; it serves as a conduit for electrons that are transferred from the formate oxidation site in the alpha subunit (FdnG) to the menaquinone associated with the gamma subunit (FdnI) of formate dehydrogenase-N. Formate dehydrogenase-N is part of a system that generates proton motive force, together with the dissimilatory nitrate reductase (Nar). The polypeptide is Formate dehydrogenase, nitrate-inducible, iron-sulfur subunit (fdnH) (Escherichia coli (strain K12)).